A 216-amino-acid chain; its full sequence is Sarcospan (216 aa).

Residues M1–P26 are Cytoplasmic-facing. Residues L27–M47 traverse the membrane as a helical segment. Topologically, residues A48–T59 are extracellular. The helical transmembrane segment at P60–V80 threads the bilayer. The Cytoplasmic portion of the chain corresponds to S81–K95. A helical membrane pass occupies residues V96 to A116. Over A117–L166 the chain is Extracellular. Residues F167 to F187 form a helical membrane-spanning segment. Residues V188–A216 lie on the Cytoplasmic side of the membrane.

Its subcellular location is the cell membrane. The protein localises to the sarcolemma. It localises to the postsynaptic cell membrane. Component of the dystrophin-glycoprotein complex (DGC), a complex that spans the muscle plasma membrane and forms a link between the F-actin cytoskeleton and the extracellular matrix. Preferentially associates with the sarcoglycan subcomplex of the DGC. This Mus musculus (Mouse) protein is Sarcospan (Sspn).